A 613-amino-acid polypeptide reads, in one-letter code: Chaperone protein DnaK (613 aa).

A disordered region spans residues 579–613; the sequence is MYQSASSTTQTGSGNQNSSKQENDKTVDAEYKEKS. The span at 581 to 597 shows a compositional bias: low complexity; that stretch reads QSASSTTQTGSGNQNSS. The span at 599–613 shows a compositional bias: basic and acidic residues; that stretch reads QENDKTVDAEYKEKS.

Belongs to the heat shock protein 70 family.

Its function is as follows. Acts as a chaperone. This is Chaperone protein DnaK from Thermoplasma volcanium (strain ATCC 51530 / DSM 4299 / JCM 9571 / NBRC 15438 / GSS1).